The sequence spans 352 residues: MLELNFSQTLGNHCLTINETLPANGITAIFGVSGAGKTSLINAISGLTRPQKGRIVLNGRVLNDAEKGICLTPEKRRVGYVFQDARLFPHYKVRGNLRYGMSKSMVDQFDKLVALLGIEPLLDRLPGSLSGGEKQRVAIGRALLTAPELLLLDEPLASLDIPRKRELLPYLQRLTREINIPMLYVSHSLDEILHLADRVMVLENGQVKAFGALEEVWGSSVMNPWLPKEQQSSILKVTVLEHHPHYAMTALALGDQHLWVNKLDEPLQAALRIRIQASDVSLVLQPPQQTSIRNVLRAKVVNSYDDNGQVEVELEVGGKTLWARISPWARDELAIKPGLWLYAQIKSVSITA.

Residues Met1–Glu229 form the ABC transporter domain. Gly31–Thr38 is a binding site for ATP. The 64-residue stretch at Gln289 to Ala352 folds into the Mop domain.

It belongs to the ABC transporter superfamily. Molybdate importer (TC 3.A.1.8) family. The complex is composed of two ATP-binding proteins (ModC), two transmembrane proteins (ModB) and a solute-binding protein (ModA).

Its subcellular location is the cell inner membrane. The catalysed reaction is molybdate(out) + ATP + H2O = molybdate(in) + ADP + phosphate + H(+). Part of the ABC transporter complex ModABC involved in molybdenum import. Responsible for energy coupling to the transport system. The chain is Molybdenum import ATP-binding protein ModC from Escherichia coli (strain K12).